A 360-amino-acid polypeptide reads, in one-letter code: Peptide chain release factor 1 (360 aa).

Gln237 carries the N5-methylglutamine modification.

It belongs to the prokaryotic/mitochondrial release factor family. Methylated by PrmC. Methylation increases the termination efficiency of RF1.

It localises to the cytoplasm. In terms of biological role, peptide chain release factor 1 directs the termination of translation in response to the peptide chain termination codons UAG and UAA. In Nitrosococcus oceani (strain ATCC 19707 / BCRC 17464 / JCM 30415 / NCIMB 11848 / C-107), this protein is Peptide chain release factor 1.